Here is a 578-residue protein sequence, read N- to C-terminus: Nuclear receptor subfamily 1 group D member 2 (578 aa).

The segment at 1–60 (MELNAGGVIAYISSSSSASSPASCHSEGSENSFQSSSSSVPSSPNSSNCDANGNPKNTDV) is required for phosphorylation by CSNK1E and cytoplasmic localization. The tract at residues 1 to 99 (MELNAGGVIA…HSGMTKFSGM (99 aa)) is modulating. Low complexity predominate over residues 13 to 47 (SSSSSASSPASCHSEGSENSFQSSSSSVPSSPNSS). The segment at 13–89 (SSSSSASSPA…KPGAPGMTKS (77 aa)) is disordered. A Phosphoserine; by GSK3-beta modification is found at Ser-46. Residues 48–61 (NCDANGNPKNTDVS) show a composition bias toward polar residues. Positions 100 to 176 (VLLCKVCGDV…VGMSRDAVRF (77 aa)) form a DNA-binding region, nuclear receptor. NR C4-type zinc fingers lie at residues 103 to 123 (CKVCGDVASGFHYGVHACEGC) and 140 to 164 (CLKNENCSIMRMNRNRCQQCRFKKC). N6-acetyllysine; by KAT5 is present on residues Lys-162 and Lys-163. The segment at 214–247 (EPHEQSVPPAQEQLRPKPQLEQENIKSTPPPSDF) is disordered. The segment covering 227–237 (LRPKPQLEQEN) has biased composition (basic and acidic residues). 2 disulfides stabilise this stretch: Cys-336–Cys-342 and Cys-373–Cys-383. The NR LBD domain occupies 368-578 (RNSYLCSTGG…EELLAFKVHP (211 aa)). Residues Cys-383 and His-567 each coordinate heme. Residues 396–578 (SGHEIWEEFS…EELLAFKVHP (183 aa)) form an interaction with ZNHIT1 region.

It belongs to the nuclear hormone receptor family. NR1 subfamily. As to quaternary structure, binds DNA as a monomer or a homodimer. Interacts with NCOA5 coactivator, leading to a strong increase of transcription of target genes. Interacts (via N-terminus) with KAT5. Interacts (via C-terminus) with HDAC1. Interacts with ZNHIT1. Interacts with SIAH2. Post-translationally, deacetylated by HDAC1. Acetylation and deacetylation regulate its transcriptional regulatory activity. Under more reducing intracellular redox conditions, Cys-383 is in its heme-bound state, which is optimal for recruitment of the NCOR1/HDAC3 corepressor complex and repression of target genes. When subjected to oxidative stress conditions, Cys-383 undergoes oxidation to form a disulfide bridge with Cys-373, also triggering a ligand switch that results in release of bound heme and derepression of target genes. In terms of processing, ubiquitinated by SIAH2; leading to its proteasomal degradation. Post-translationally, phosphorylated by CSNK1E; phosphorylation enhances its cytoplasmic localization.

Its subcellular location is the nucleus. The protein localises to the cytoplasm. The heme-bound form can bind gaseous signaling molecules such as CO and nitric oxide (NO) and NO can reverse its transcriptional repressor activity. Transcriptional repressor which coordinates circadian rhythm and metabolic pathways in a heme-dependent manner. Integral component of the complex transcription machinery that governs circadian rhythmicity and forms a critical negative limb of the circadian clock by directly repressing the expression of core clock components BMAL1 and CLOCK. Also regulates genes involved in metabolic functions, including lipid metabolism and the inflammatory response. Acts as a receptor for heme which stimulates its interaction with the NCOR1/HDAC3 corepressor complex, enhancing transcriptional repression. Recognizes two classes of DNA response elements within the promoter of its target genes and can bind to DNA as either monomers or homodimers, depending on the nature of the response element. Binds as a monomer to a response element composed of the consensus half-site motif 5'-[A/G]GGTCA-3' preceded by an A/T-rich 5' sequence (RevRE), or as a homodimer to a direct repeat of the core motif spaced by two nuclegotides (RevDR-2). Acts as a potent competitive repressor of ROR alpha (RORA) function and also negatively regulates the expression of NR1D1. Regulates lipid and energy homeostasis in the skeletal muscle via repression of genes involved in lipid metabolism and myogenesis including: CD36, FABP3, FABP4, UCP3, SCD1 and MSTN. Regulates hepatic lipid metabolism via the repression of APOC3. Represses gene expression at a distance in macrophages by inhibiting the transcription of enhancer-derived RNAs (eRNAs). In addition to its activity as a repressor, can also act as a transcriptional activator. Acts as a transcriptional activator of the sterol regulatory element-binding protein 1 (SREBF1) and the inflammatory mediator interleukin-6 (IL6) in the skeletal muscle. Plays a role in the regulation of circadian sleep/wake cycle; essential for maintaining wakefulness during the dark phase or active period. Key regulator of skeletal muscle mitochondrial function; negatively regulates the skeletal muscle expression of core clock genes and genes involved in mitochondrial biogenesis, fatty acid beta-oxidation and lipid metabolism. May play a role in the circadian control of neutrophilic inflammation in the lung. The protein is Nuclear receptor subfamily 1 group D member 2 of Rattus norvegicus (Rat).